A 253-amino-acid chain; its full sequence is Triosephosphate isomerase (253 aa).

9-11 (NWK) contributes to the substrate binding site. H95 serves as the catalytic Electrophile. Residue E167 is the Proton acceptor of the active site. Residues G173, S213, and 234–235 (GG) each bind substrate. S213 bears the Phosphoserine mark.

Belongs to the triosephosphate isomerase family. As to quaternary structure, homodimer.

The protein localises to the cytoplasm. The enzyme catalyses D-glyceraldehyde 3-phosphate = dihydroxyacetone phosphate. The protein operates within carbohydrate biosynthesis; gluconeogenesis. It participates in carbohydrate degradation; glycolysis; D-glyceraldehyde 3-phosphate from glycerone phosphate: step 1/1. In terms of biological role, involved in the gluconeogenesis. Catalyzes stereospecifically the conversion of dihydroxyacetone phosphate (DHAP) to D-glyceraldehyde-3-phosphate (G3P). This Bacillus licheniformis (strain ATCC 14580 / DSM 13 / JCM 2505 / CCUG 7422 / NBRC 12200 / NCIMB 9375 / NCTC 10341 / NRRL NRS-1264 / Gibson 46) protein is Triosephosphate isomerase.